Consider the following 372-residue polypeptide: Isoliquiritigenin 2'-O-methyltransferase (372 aa).

Residues glycine 217, aspartate 240, aspartate 260, methionine 261, and lysine 274 each contribute to the S-adenosyl-L-methionine site. Residue histidine 278 is the Proton acceptor of the active site.

Belongs to the class I-like SAM-binding methyltransferase superfamily. Cation-independent O-methyltransferase family. COMT subfamily. In terms of assembly, monomer. Homodimer. Roots (at protein level). Expressed mainly in roots, and to a lesser extent in root nodules. In the roots, expression is not detected in the root tip or the cells immediately behind the tip, but is detected in tissues starting 1.5-2.0 mm distal to the root tip. Detected in the epidermal and cortical cells of 2 day old roots, with lower levels in vascular tissue.

The enzyme catalyses isoliquiritigenin + S-adenosyl-L-methionine = 2'-O-methylisoliquiritigenin + S-adenosyl-L-homocysteine + H(+). It catalyses the reaction licodione + S-adenosyl-L-methionine = 2'-O-methyllicodione + S-adenosyl-L-homocysteine + H(+). Its activity is regulated as follows. Inhibited by 1 mM Co(2+), Cu(2+), Zn(2+) or Fe(2+). Non-competitively inhibited by S-adenosyl-L-homocysteine. Competitively inhibited by 2'-O-methylisoliquiritigenin. Methylates the 2'-hydroxyl of isoliquiritigenin and licodione. Does not methylate narigenin chalcone, caffeic acid or daidzein. Involved in the root nodulation initiation by promoting the biosynthesis of nod-inducing molecules. The chain is Isoliquiritigenin 2'-O-methyltransferase from Medicago sativa (Alfalfa).